Here is a 152-residue protein sequence, read N- to C-terminus: Arginine repressor (152 aa).

It belongs to the ArgR family.

The protein resides in the cytoplasm. It functions in the pathway amino-acid biosynthesis; L-arginine biosynthesis [regulation]. Functionally, regulates arginine biosynthesis genes. This is Arginine repressor from Caldicellulosiruptor saccharolyticus (strain ATCC 43494 / DSM 8903 / Tp8T 6331).